The chain runs to 1499 residues: Autophagy-related protein 2 (1499 aa).

Over residues 211 to 221 the composition is skewed to polar residues; that stretch reads EQSVPSYGSSS. The disordered stretch occupies residues 211–237; that stretch reads EQSVPSYGSSSSDKEDDNTSDSEDPLS. Over residues 224–234 the composition is skewed to acidic residues; that stretch reads KEDDNTSDSED.

It belongs to the ATG2 family.

It is found in the preautophagosomal structure membrane. The protein localises to the endoplasmic reticulum membrane. The enzyme catalyses a 1,2-diacyl-sn-glycero-3-phosphocholine(in) = a 1,2-diacyl-sn-glycero-3-phosphocholine(out). The catalysed reaction is a 1,2-diacyl-sn-glycero-3-phospho-L-serine(in) = a 1,2-diacyl-sn-glycero-3-phospho-L-serine(out). It carries out the reaction a 1,2-diacyl-sn-glycero-3-phosphoethanolamine(in) = a 1,2-diacyl-sn-glycero-3-phosphoethanolamine(out). Its function is as follows. Lipid transfer protein required for autophagosome completion and peroxisome degradation. Tethers the edge of the isolation membrane (IM) to the endoplasmic reticulum (ER) and mediates direct lipid transfer from ER to IM for IM expansion. ATG2 binds to the ER exit site (ERES), which is the membrane source for autophagosome formation, using basic residues in its N-terminal region (NR) and to the expanding edge of the IM through its C-terminal region. The latter binding is assisted by an ATG18-PtdIns3P interaction. ATG2 then extracts phospholipids from the membrane source using its NR and transfers them to ATG9 to the IM through its predicted beta-sheet-rich structure for membrane expansion. The polypeptide is Autophagy-related protein 2 (Kluyveromyces marxianus (strain DMKU3-1042 / BCC 29191 / NBRC 104275) (Yeast)).